Consider the following 275-residue polypeptide: 4-hydroxy-tetrahydrodipicolinate reductase (275 aa).

Residues 13–18 (GAAGKM) and 108–110 (GTT) contribute to the NAD(+) site. The Proton donor/acceptor role is filled by His-164. A (S)-2,3,4,5-tetrahydrodipicolinate-binding site is contributed by His-165. Residue Lys-168 is the Proton donor of the active site. 174 to 175 (GT) is a (S)-2,3,4,5-tetrahydrodipicolinate binding site.

Belongs to the DapB family.

The protein localises to the cytoplasm. It catalyses the reaction (S)-2,3,4,5-tetrahydrodipicolinate + NAD(+) + H2O = (2S,4S)-4-hydroxy-2,3,4,5-tetrahydrodipicolinate + NADH + H(+). The catalysed reaction is (S)-2,3,4,5-tetrahydrodipicolinate + NADP(+) + H2O = (2S,4S)-4-hydroxy-2,3,4,5-tetrahydrodipicolinate + NADPH + H(+). It functions in the pathway amino-acid biosynthesis; L-lysine biosynthesis via DAP pathway; (S)-tetrahydrodipicolinate from L-aspartate: step 4/4. Functionally, catalyzes the conversion of 4-hydroxy-tetrahydrodipicolinate (HTPA) to tetrahydrodipicolinate. The polypeptide is 4-hydroxy-tetrahydrodipicolinate reductase (Acaryochloris marina (strain MBIC 11017)).